Reading from the N-terminus, the 67-residue chain is Conotoxin TsMMSK-011 (67 aa).

An N-terminal signal peptide occupies residues 1 to 22 (MMSKLGVLLTICLLLFPLTVLP). Positions 23 to 50 (MDGDQPADLPALRTQDIATDQSPWFDPV) are excised as a propeptide. Cystine bridges form between Cys-53–Cys-65, Cys-54–Cys-61, and Cys-58–Cys-64. Pro-63 carries the 4-hydroxyproline modification.

Belongs to the conotoxin M superfamily. Expressed by the venom duct.

It localises to the secreted. This is Conotoxin TsMMSK-011 from Conus tessulatus (Tessellate cone).